The following is a 293-amino-acid chain: Phosphatidylglycerol--prolipoprotein diacylglyceryl transferase (293 aa).

The next 4 membrane-spanning stretches (helical) occupy residues 4 to 24, 45 to 65, 81 to 101, and 115 to 135; these read ILAF…LFIF, FELR…YFVA, ELIF…YVLF, and IWEG…TGFL. R165 provides a ligand contact to a 1,2-diacyl-sn-glycero-3-phospho-(1'-sn-glycerol). 3 helical membrane-spanning segments follow: residues 204–224, 231–249, and 262–282; these read PTFL…SVYF, HGEV…RIVI, and IKAA…GFLI.

This sequence belongs to the Lgt family.

The protein localises to the cell inner membrane. The enzyme catalyses L-cysteinyl-[prolipoprotein] + a 1,2-diacyl-sn-glycero-3-phospho-(1'-sn-glycerol) = an S-1,2-diacyl-sn-glyceryl-L-cysteinyl-[prolipoprotein] + sn-glycerol 1-phosphate + H(+). The protein operates within protein modification; lipoprotein biosynthesis (diacylglyceryl transfer). Its function is as follows. Catalyzes the transfer of the diacylglyceryl group from phosphatidylglycerol to the sulfhydryl group of the N-terminal cysteine of a prolipoprotein, the first step in the formation of mature lipoproteins. This Thermotoga petrophila (strain ATCC BAA-488 / DSM 13995 / JCM 10881 / RKU-1) protein is Phosphatidylglycerol--prolipoprotein diacylglyceryl transferase.